The sequence spans 275 residues: 2-dehydro-3-deoxyphosphooctonate aldolase (275 aa).

The protein belongs to the KdsA family.

Its subcellular location is the cytoplasm. The enzyme catalyses D-arabinose 5-phosphate + phosphoenolpyruvate + H2O = 3-deoxy-alpha-D-manno-2-octulosonate-8-phosphate + phosphate. It participates in carbohydrate biosynthesis; 3-deoxy-D-manno-octulosonate biosynthesis; 3-deoxy-D-manno-octulosonate from D-ribulose 5-phosphate: step 2/3. Its pathway is bacterial outer membrane biogenesis; lipopolysaccharide biosynthesis. The chain is 2-dehydro-3-deoxyphosphooctonate aldolase from Francisella philomiragia subsp. philomiragia (strain ATCC 25017 / CCUG 19701 / FSC 153 / O#319-036).